A 215-amino-acid polypeptide reads, in one-letter code: Cytochrome b6 (215 aa).

A helical transmembrane segment spans residues 32-52 (IFYCLGGITFTCFLVQVATGF). Cys-35 serves as a coordination point for heme c. Heme b-binding residues include His-86 and His-100. The next 3 membrane-spanning stretches (helical) occupy residues 90 to 110 (ASMMVLMMILHVFRVWLTGGF), 116 to 136 (LTWTTGVIMAVCTVSFGVTGY), and 186 to 206 (LHTFVLPLLTAVFMLMHFLMI). Residues His-187 and His-202 each coordinate heme b.

It belongs to the cytochrome b family. PetB subfamily. As to quaternary structure, the 4 large subunits of the cytochrome b6-f complex are cytochrome b6, subunit IV (17 kDa polypeptide, PetD), cytochrome f and the Rieske protein, while the 4 small subunits are PetG, PetL, PetM and PetN. The complex functions as a dimer. Requires heme b as cofactor. It depends on heme c as a cofactor.

It is found in the plastid. The protein resides in the chloroplast thylakoid membrane. Functionally, component of the cytochrome b6-f complex, which mediates electron transfer between photosystem II (PSII) and photosystem I (PSI), cyclic electron flow around PSI, and state transitions. This is Cytochrome b6 from Stigeoclonium helveticum (Green alga).